A 343-amino-acid chain; its full sequence is F-box/kelch-repeat protein At3g08810 (343 aa).

The segment covering M1 to K15 has biased composition (basic residues). The disordered stretch occupies residues M1–S25. The F-box domain occupies Q20–R66. Kelch repeat units follow at residues D134 to G181, Q183 to S224, and Y225 to A271.

In Arabidopsis thaliana (Mouse-ear cress), this protein is F-box/kelch-repeat protein At3g08810.